A 449-amino-acid polypeptide reads, in one-letter code: Xaa-Pro dipeptidase (449 aa).

Residues Asp246, Asp257, His345, Glu390, and Glu429 each coordinate Mn(2+).

It belongs to the peptidase M24B family. Bacterial-type prolidase subfamily. The cofactor is Mn(2+).

It carries out the reaction Xaa-L-Pro dipeptide + H2O = an L-alpha-amino acid + L-proline. In terms of biological role, splits dipeptides with a prolyl residue in the C-terminal position. This Yersinia enterocolitica serotype O:8 / biotype 1B (strain NCTC 13174 / 8081) protein is Xaa-Pro dipeptidase.